The chain runs to 894 residues: Translation initiation factor IF-2 (894 aa).

Residues 47–305 are disordered; it reads AHLNRENGSG…GSALQQSFQK (259 aa). Residues 68–82 show a composition bias toward polar residues; that stretch reads STLNIPGTGGKSKSV. Composition is skewed to basic and acidic residues over residues 93-159 and 166-219; these read VKRD…KDKV and DMTK…KWTD. The segment covering 254–269 has biased composition (basic residues); that stretch reads GRSRNAKAARPAKKGN. The span at 270–283 shows a compositional bias: basic and acidic residues; the sequence is KHSESKADREEARA. The tr-type G domain occupies 393–562; it reads PRAPVVTIMG…LLQAEVLELK (170 aa). The tract at residues 402–409 is G1; sequence GHVDHGKT. 402-409 is a binding site for GTP; the sequence is GHVDHGKT. The segment at 427–431 is G2; sequence GITQH. Residues 448–451 form a G3 region; the sequence is DTPG. GTP-binding positions include 448–452 and 502–505; these read DTPGH and NKID. The interval 502-505 is G4; the sequence is NKID. The tract at residues 538–540 is G5; it reads SAK.

Belongs to the TRAFAC class translation factor GTPase superfamily. Classic translation factor GTPase family. IF-2 subfamily.

The protein localises to the cytoplasm. Its function is as follows. One of the essential components for the initiation of protein synthesis. Protects formylmethionyl-tRNA from spontaneous hydrolysis and promotes its binding to the 30S ribosomal subunits. Also involved in the hydrolysis of GTP during the formation of the 70S ribosomal complex. This is Translation initiation factor IF-2 from Citrobacter koseri (strain ATCC BAA-895 / CDC 4225-83 / SGSC4696).